The primary structure comprises 161 residues: MPSFDIVSKVDMQEVDNAVNQTIKEIAQRYDFKGSKSEITQEKDTVKLLSEDDFRLKAIIDILQSKFIKRGISVKALQYGKVENASGGMVRQIITIQQGISKEKGKEINNVIKETKLKVQSQIQEDQLRVTGKNIDDLQEVIQLLKGKDLGVELQFVNFRQ.

It belongs to the YajQ family.

In terms of biological role, nucleotide-binding protein. This chain is Nucleotide-binding protein Gura_0717, found in Geotalea uraniireducens (strain Rf4) (Geobacter uraniireducens).